We begin with the raw amino-acid sequence, 392 residues long: Protein O-glucosyltransferase 1 (392 aa).

The signal sequence occupies residues 1–23; it reads MERLSGCRLRPWMLLLLLFPVQG. Cystine bridges form between C49-C56, C54-C357, C102-C108, and C263-C286. The N-linked (GlcNAc...) asparagine glycan is linked to N53. Residues 103-107 are interaction with the consensus sequence C-X-S-X-[PA]-C in peptide substrates; sequence MFPSR. Catalysis depends on D133, which acts as the Proton donor/acceptor. Residues 172 to 178 form an interaction with the consensus sequence C-X-S-X-[PA]-C in peptide substrates region; the sequence is AVWPLYP. A UDP-alpha-D-glucose-binding site is contributed by Y177. The N-linked (GlcNAc...) asparagine glycan is linked to N204. UDP-alpha-D-glucose-binding positions include S212, R218, and 274–279; that span reads VAASFR. N373 carries an N-linked (GlcNAc...) asparagine glycan. The Prevents secretion from ER signature appears at 389 to 392; it reads KTEL.

The protein belongs to the glycosyltransferase 90 family.

It is found in the endoplasmic reticulum lumen. The catalysed reaction is L-seryl-[EGF-like domain protein] + UDP-alpha-D-xylose = 3-O-(beta-D-xylosyl)-L-seryl-[EGF-like domain protein] + UDP + H(+). It catalyses the reaction L-seryl-[EGF-like domain protein] + UDP-alpha-D-glucose = 3-O-(beta-D-glucosyl)-L-seryl-[EGF-like domain protein] + UDP + H(+). The protein operates within protein modification; protein glycosylation. Its function is as follows. Dual specificity glycosyltransferase that catalyzes the transfer of glucose and xylose from UDP-glucose and UDP-xylose, respectively, to a serine residue found in the consensus sequence of C-X-S-X-P-C. Specifically targets extracellular EGF repeats of protein such as CRB2, F7, F9 and NOTCH2. Acts as a positive regulator of Notch signaling by mediating O-glucosylation of Notch, leading to regulate muscle development. Notch glucosylation does not affect Notch ligand binding. Required during early development to promote gastrulation: acts by mediating O-glucosylation of CRB2, which is required for CRB2 localization to the cell membrane. This Rattus norvegicus (Rat) protein is Protein O-glucosyltransferase 1 (Poglut1).